Reading from the N-terminus, the 302-residue chain is MSVFIDKNTKVMVQGITGSTALFHTKQMLDYGTKIVAGVTPGKGGQVVEGVPVFNTVEEAKNETGATVSVIYVPAPFAADSILEAADADLDMVICITEHIPVLDMVKVKRYLQGRKTRLVGPNCPGVITADECKIGIMPGYIHKKGHVGVVSRSGTLTYEAVHQLTEEGIGQTTAVGIGGDPVNGTNFIDVLKAFNEDDETKAVVMIGEIGGTAEEEAAEWIKANMTKPVVGFIGGQTAPPGKRMGHAGAIISGGKGTAEEKIKTLNSCGVKTAATPSEIGSTLIEAAKEAGIYESLLTVNK.

Residues 17 to 20, K43, and 96 to 98 each bind CoA; these read TGST and ITE. Substrate is bound at residue Y159. The Tele-phosphohistidine intermediate role is filled by H247.

Belongs to the succinate/malate CoA ligase alpha subunit family. Heterotetramer of two alpha and two beta subunits.

It carries out the reaction succinate + ATP + CoA = succinyl-CoA + ADP + phosphate. It catalyses the reaction GTP + succinate + CoA = succinyl-CoA + GDP + phosphate. It participates in carbohydrate metabolism; tricarboxylic acid cycle; succinate from succinyl-CoA (ligase route): step 1/1. Its function is as follows. Succinyl-CoA synthetase functions in the citric acid cycle (TCA), coupling the hydrolysis of succinyl-CoA to the synthesis of either ATP or GTP and thus represents the only step of substrate-level phosphorylation in the TCA. The alpha subunit of the enzyme binds the substrates coenzyme A and phosphate, while succinate binding and nucleotide specificity is provided by the beta subunit. This Staphylococcus aureus (strain COL) protein is Succinate--CoA ligase [ADP-forming] subunit alpha.